We begin with the raw amino-acid sequence, 277 residues long: Hydroxypyruvate/pyruvate aldolase (277 aa).

Histidine 54 acts as the Proton acceptor in catalysis. A divalent metal cation is bound by residues glutamate 158 and aspartate 184.

It belongs to the HpcH/HpaI aldolase family. A divalent metal cation serves as cofactor.

It catalyses the reaction D-glyceraldehyde + 3-hydroxypyruvate = (3R,4S,5R)-3,4,5,6-tetrahydroxy-2-oxohexanoate. It carries out the reaction D-glyceraldehyde + 3-hydroxypyruvate = 2-dehydro-D-gluconate. The catalysed reaction is D-glyceraldehyde + 3-hydroxypyruvate = 2-dehydro-D-galactonate. The enzyme catalyses D-glyceraldehyde + pyruvate = 2-dehydro-3-deoxy-L-galactonate. In terms of biological role, aldolase which can catalyze in vitro the aldolisation reaction between hydroxypyruvate (HPA) or pyruvate (PA) and D-glyceraldehyde (D-GA). The condensation of hydroxypyruvate and D-glyceraldehyde produces (3R,4S,5R)-3,4,5,6-tetrahydroxy-2-oxohexanoate as the major product, 2-dehydro-D-gluconate and 2-dehydro-D-galactonate. The condensation of pyruvate and D-glyceraldehyde produces 2-dehydro-3-deoxy-L-galactonate as the major product. This is Hydroxypyruvate/pyruvate aldolase from Deinococcus radiodurans (strain ATCC 13939 / DSM 20539 / JCM 16871 / CCUG 27074 / LMG 4051 / NBRC 15346 / NCIMB 9279 / VKM B-1422 / R1).